The primary structure comprises 110 residues: Competence pilus inhibition repressor (110 aa).

One can recognise an HTH cro/C1-type domain in the interval 7 to 61 (VRFLRKRQGWTQQQLADFSHTSKSNISNLENGNQGYSPAILEYLAKAFNCSVSQI). The H-T-H motif DNA-binding region spans 18-37 (QQQLADFSHTSKSNISNLEN).

Represses transcription of the PilB-specific inhibitory protein CpiA. This Acinetobacter baylyi (strain ATCC 33305 / BD413 / ADP1) protein is Competence pilus inhibition repressor.